The sequence spans 483 residues: Ero1-like protein (483 aa).

The signal sequence occupies residues 1–29; it reads MTTRTVQRNLWASAAVVLVLLLLWTDTTG. 6 cysteine pairs are disulfide-bonded: cysteine 44/cysteine 57, cysteine 46/cysteine 55, cysteine 94/cysteine 402, cysteine 103/cysteine 108, cysteine 227/cysteine 251, and cysteine 405/cysteine 408. FAD contacts are provided by arginine 206, threonine 208, and tryptophan 219. The N-linked (GlcNAc...) asparagine glycan is linked to asparagine 232. FAD is bound by residues serine 262, histidine 265, and arginine 301. N-linked (GlcNAc...) asparagine glycosylation is present at asparagine 395.

This sequence belongs to the EROs family. May function both as a monomer and a homodimer. Requires FAD as cofactor.

The protein resides in the endoplasmic reticulum membrane. In terms of biological role, oxidoreductase involved in disulfide bond formation in the endoplasmic reticulum. Efficiently reoxidizes pdi-1, the enzyme catalyzing protein disulfide formation, in order to allow pdi-1 to sustain additional rounds of disulfide formation. Following pdi reoxidation, passes its electrons to molecular oxygen via FAD, leading to the production of reactive oxygen species (ROS) in the cell. The sequence is that of Ero1-like protein (Ero1L) from Drosophila melanogaster (Fruit fly).